The following is a 245-amino-acid chain: Phosphoadenosine 5'-phosphosulfate reductase (245 aa).

Cys-239 acts as the Nucleophile; cysteine thiosulfonate intermediate in catalysis.

Belongs to the PAPS reductase family. CysH subfamily.

Its subcellular location is the cytoplasm. It catalyses the reaction [thioredoxin]-disulfide + sulfite + adenosine 3',5'-bisphosphate + 2 H(+) = [thioredoxin]-dithiol + 3'-phosphoadenylyl sulfate. It functions in the pathway sulfur metabolism; hydrogen sulfide biosynthesis; sulfite from sulfate: step 3/3. Its function is as follows. Catalyzes the formation of sulfite from phosphoadenosine 5'-phosphosulfate (PAPS) using thioredoxin as an electron donor. In Shewanella oneidensis (strain ATCC 700550 / JCM 31522 / CIP 106686 / LMG 19005 / NCIMB 14063 / MR-1), this protein is Phosphoadenosine 5'-phosphosulfate reductase.